The sequence spans 147 residues: Hemoglobin subunit beta-1 (147 aa).

Residues 3–147 (EWTDKERSII…VVSALGKQYH (145 aa)) enclose the Globin domain. Heme b contacts are provided by His-64 and His-93.

It belongs to the globin family. Heterotetramer of two alpha chains and two beta chains. Red blood cells.

Involved in oxygen transport from gills to the various peripheral tissues. The sequence is that of Hemoglobin subunit beta-1 (hbb1) from Pagothenia borchgrevinki (Bald rockcod).